The chain runs to 455 residues: Ribulose bisphosphate carboxylase large chain (455 aa).

Lys5 carries the N6,N6,N6-trimethyllysine modification. Positions 114 and 164 each coordinate substrate. Lys166 functions as the Proton acceptor in the catalytic mechanism. A substrate-binding site is contributed by Lys168. Positions 192, 194, and 195 each coordinate Mg(2+). N6-carboxylysine is present on Lys192. His285 serves as the catalytic Proton acceptor. Substrate is bound by residues Arg286, His318, and Ser370.

This sequence belongs to the RuBisCO large chain family. Type I subfamily. Heterohexadecamer of 8 large chains and 8 small chains; disulfide-linked. The disulfide link is formed within the large subunit homodimers. Requires Mg(2+) as cofactor. Post-translationally, the disulfide bond which can form in the large chain dimeric partners within the hexadecamer appears to be associated with oxidative stress and protein turnover.

Its subcellular location is the plastid. The protein localises to the chloroplast. It catalyses the reaction 2 (2R)-3-phosphoglycerate + 2 H(+) = D-ribulose 1,5-bisphosphate + CO2 + H2O. The catalysed reaction is D-ribulose 1,5-bisphosphate + O2 = 2-phosphoglycolate + (2R)-3-phosphoglycerate + 2 H(+). In terms of biological role, ruBisCO catalyzes two reactions: the carboxylation of D-ribulose 1,5-bisphosphate, the primary event in carbon dioxide fixation, as well as the oxidative fragmentation of the pentose substrate in the photorespiration process. Both reactions occur simultaneously and in competition at the same active site. This chain is Ribulose bisphosphate carboxylase large chain, found in Vachellia farnesiana (Sweet acacia).